A 340-amino-acid polypeptide reads, in one-letter code: Deubiquitinase SseL (340 aa).

H223 is a catalytic residue. C285 functions as the Nucleophile in the catalytic mechanism.

This sequence belongs to the peptidase C79 family.

Its subcellular location is the secreted. The protein resides in the host cytoplasm. Its function is as follows. Effector proteins function to alter host cell physiology and promote bacterial survival in host tissues. This protease targets the host cell ubiquitin pathway by acting as a deubiquitinase in infected host cells. Specifically hydrolyzes mono- and polyubiquitin substrates in vitro with a preference for 'Lys-63'-linked ubiquitin chains, suggesting that it interferes with a signaling pathway rather than inhibiting proteasomal-dependent degradation of its targets. Does not possess desumoylating activity. Is required for the Salmonella-induced delayed cytotoxicity in macrophages and full virulence. Is not required for intracellular bacterial replication. In Salmonella typhimurium (strain LT2 / SGSC1412 / ATCC 700720), this protein is Deubiquitinase SseL (sseL).